We begin with the raw amino-acid sequence, 270 residues long: Formamidopyrimidine-DNA glycosylase (270 aa).

The Schiff-base intermediate with DNA role is filled by Pro-2. The Proton donor role is filled by Glu-3. Lys-57 (proton donor; for beta-elimination activity) is an active-site residue. The DNA site is built by His-90, Arg-109, and Lys-151. Residues 236 to 270 (RVYGRKGQACEVCESEIQSVTLGQRNTFFCEQCQK) form an FPG-type zinc finger. Arg-260 acts as the Proton donor; for delta-elimination activity in catalysis.

The protein belongs to the FPG family. In terms of assembly, monomer. It depends on Zn(2+) as a cofactor.

It catalyses the reaction Hydrolysis of DNA containing ring-opened 7-methylguanine residues, releasing 2,6-diamino-4-hydroxy-5-(N-methyl)formamidopyrimidine.. It carries out the reaction 2'-deoxyribonucleotide-(2'-deoxyribose 5'-phosphate)-2'-deoxyribonucleotide-DNA = a 3'-end 2'-deoxyribonucleotide-(2,3-dehydro-2,3-deoxyribose 5'-phosphate)-DNA + a 5'-end 5'-phospho-2'-deoxyribonucleoside-DNA + H(+). Its function is as follows. Involved in base excision repair of DNA damaged by oxidation or by mutagenic agents. Acts as a DNA glycosylase that recognizes and removes damaged bases. Has a preference for oxidized purines, such as 7,8-dihydro-8-oxoguanine (8-oxoG). Has AP (apurinic/apyrimidinic) lyase activity and introduces nicks in the DNA strand. Cleaves the DNA backbone by beta-delta elimination to generate a single-strand break at the site of the removed base with both 3'- and 5'-phosphates. The protein is Formamidopyrimidine-DNA glycosylase of Pseudoalteromonas atlantica (strain T6c / ATCC BAA-1087).